Here is a 1204-residue protein sequence, read N- to C-terminus: MTKFTKEQNQAINDYGKDILVSASAGSGKTTVLVERVLKRILSGTPVSSLLIITFTKAAAREMKERIKQKISDQIEKEPNNQFLRSQLLDVDTANISTIDSFCLDVIRRFYYVIDLDPQFSVLTDETQAELLKERALHEIEIEYLEKNDQDFQDFYDNFSGDRDAEGARNLLLQLYNTVVTEPNYEKFLNNLPNFYQVQDDLIESDLWQTQIKPLLIKEIKDLQTEIRQFFENPQMENPDLVKVKENYDIFTSRLEQFLNALEDDHSYNEIRASLMNCKFEKNIRKSKKWSEESLETYQESQKLKSDLNDQLKKIFANFFVVEEKEQVNILKKSEKLVKTIVDAEKKLIKRFGQLKREQNLIDYSDMEQFAFSILTTDTSNAHIAQEYYQEKFNEILIDEYQDVNALQENIIAAIKKKGQNNLFMVGDIKQSIYGFRQARPDLFLSKYHAYGQNDDSEKIVLSDNFRSTQRVTKTVNSLFNPILTANFGGIDYKKEGQLQFGATYYPTDLPTASEYIFTDKKQTQASFEENFGDEMDFSEIQMVIARIKQLKEENFQVWDRKTQLKRPLEYSDIAIITRTRSDNLQVMQEFAKADLPLFVTDAQNYFQTFELVMIMNYLRLIDNPQQDIPLVAVLRSPLFNFKEPELAQIRVKTRSGNFYNALTSFASVNSDLGQKCKNFLQQLESLRSFAATHRISELIWSIYERTHLLEIVTGLPNGQQRRVNLESLYERATSYESAGFKGLYQFISFIERMRKNQKDLAQPLLSDKADKAVKLMTIHASKGLEFPVVFVMGLGHKYQTRDLSGNFTISKDGLGLTIKEKDYRIDSLVKSLADVEKRQQMLEEEARILYVGLTRAQQKLILVASVSEMEAKQKKWESEIDQKTNILPLIRKINAQSPLDFLGPKLEQKHEFDQTIEDMTLALEEQDKIYYLKFAVQSDIEEKDEQKDDTQKLSSKMNDVVKTLYNFEYPFADATKTTAYQSVSEIKKVFNDPMDTELENSRLISSSNRYLQPIDETPVFLEKQKFTGAEIGTAMHLVLQYYDYQGDKTEINLEQEIEELVELGKLNPLMVPHLSKEALNWFVMSEFAAEFWQKPEKLHRESQFSSLVNASELFNDFSDSAAKILVHGTIDGYFETDEGLILFDYKTDFVDKTHEEQAIDKIKKKYTGQLRLYEQALNEISENKKVIGKYLILLDARKVVPVD.

The UvrD-like helicase ATP-binding domain occupies 2-469 (TKFTKEQNQA…IVLSDNFRST (468 aa)). Residue 23–30 (ASAGSGKT) participates in ATP binding. The UvrD-like helicase C-terminal domain occupies 496–784 (EGQLQFGATY…KLMTIHASKG (289 aa)).

It belongs to the helicase family. AddA subfamily. As to quaternary structure, heterodimer of AddA and AddB/RexB. Mg(2+) serves as cofactor.

It carries out the reaction Couples ATP hydrolysis with the unwinding of duplex DNA by translocating in the 3'-5' direction.. The enzyme catalyses ATP + H2O = ADP + phosphate + H(+). In terms of biological role, the heterodimer acts as both an ATP-dependent DNA helicase and an ATP-dependent, dual-direction single-stranded exonuclease. Recognizes the chi site generating a DNA molecule suitable for the initiation of homologous recombination. The AddA nuclease domain is required for chi fragment generation; this subunit has the helicase and 3' -&gt; 5' nuclease activities. The chain is ATP-dependent helicase/nuclease subunit A from Lactobacillus johnsonii (strain CNCM I-12250 / La1 / NCC 533).